The primary structure comprises 163 residues: MGIDPGLTRCGLSVVQAGKGRSVIPVAVGVVRTPPHAELSQRLLELSEAVNSWIDEYQPDVVAIERIFERGNVSTVMNTAHGVGVLVLAAAQRGLPVHMYTPSEVKKAISGNGRADKKQMTAMITRILGLVEAPKPADAADALALAVCHCWRAPMLAIHNSQR.

Active-site residues include D4, E65, and D138. Residues D4, E65, and D138 each coordinate Mg(2+).

It belongs to the RuvC family. Homodimer which binds Holliday junction (HJ) DNA. The HJ becomes 2-fold symmetrical on binding to RuvC with unstacked arms; it has a different conformation from HJ DNA in complex with RuvA. In the full resolvosome a probable DNA-RuvA(4)-RuvB(12)-RuvC(2) complex forms which resolves the HJ. The cofactor is Mg(2+).

Its subcellular location is the cytoplasm. The catalysed reaction is Endonucleolytic cleavage at a junction such as a reciprocal single-stranded crossover between two homologous DNA duplexes (Holliday junction).. In terms of biological role, the RuvA-RuvB-RuvC complex processes Holliday junction (HJ) DNA during genetic recombination and DNA repair. Endonuclease that resolves HJ intermediates. Cleaves cruciform DNA by making single-stranded nicks across the HJ at symmetrical positions within the homologous arms, yielding a 5'-phosphate and a 3'-hydroxyl group; requires a central core of homology in the junction. The consensus cleavage sequence is 5'-(A/T)TT(C/G)-3'. Cleavage occurs on the 3'-side of the TT dinucleotide at the point of strand exchange. HJ branch migration catalyzed by RuvA-RuvB allows RuvC to scan DNA until it finds its consensus sequence, where it cleaves and resolves the cruciform DNA. In Corynebacterium diphtheriae (strain ATCC 700971 / NCTC 13129 / Biotype gravis), this protein is Crossover junction endodeoxyribonuclease RuvC.